A 376-amino-acid chain; its full sequence is Salivary hyaluronidase (376 aa).

The signal sequence occupies residues 1-16 (MNWIFHLFCAVYGIFC). Cystine bridges form between C32–C328 and C203–C217. 4 N-linked (GlcNAc...) asparagine glycosylation sites follow: N36, N55, N77, and N88. The active-site Proton donor is the E118. N-linked (GlcNAc...) asparagine glycans are attached at residues N143, N153, N181, N214, N226, N248, N287, N321, N336, N356, and N371.

It belongs to the glycosyl hydrolase 56 family. In terms of processing, glycosylated; glycosylation is critical for enzymatic activity. As to expression, female salivary gland (at protein level).

It localises to the secreted. It catalyses the reaction Random hydrolysis of (1-&gt;4)-linkages between N-acetyl-beta-D-glucosamine and D-glucuronate residues in hyaluronate.. Its function is as follows. Hydrolyzes high molecular weight hyaluronic acid to produce small oligosaccharides. Up-regulates expression of CSF2, CSF3, LIF, CXCL1, CXCL2 and CXCL8 in cultured human dermal microvascular endothelial cells. Promotes host neutrophil recruitment at the injection site. Functionally, (Microbial infection) Probably promotes Leishmania major infection in the host. The protein is Salivary hyaluronidase of Lutzomyia longipalpis (Sand fly).